Reading from the N-terminus, the 110-residue chain is T cell receptor alpha variable 22 (110 aa).

Residues 1–21 form the signal peptide; sequence MKRILGALLGLLSAQVCCVRG. The Ig-like domain occupies 22–110; the sequence is IQVEQSPPDL…DSGVYFCAVE (89 aa). N-linked (GlcNAc...) asparagine glycosylation is found at N38 and N44. A disulfide bridge links C43 with C107.

Alpha-beta TR is a heterodimer composed of an alpha and beta chain; disulfide-linked. The alpha-beta TR is associated with the transmembrane signaling CD3 coreceptor proteins to form the TR-CD3 (TcR or TCR). The assembly of alpha-beta TR heterodimers with CD3 occurs in the endoplasmic reticulum where a single alpha-beta TR heterodimer associates with one CD3D-CD3E heterodimer, one CD3G-CD3E heterodimer and one CD247 homodimer forming a stable octameric structure. CD3D-CD3E and CD3G-CD3E heterodimers preferentially associate with TR alpha and TR beta chains, respectively. The association of the CD247 homodimer is the last step of TcR assembly in the endoplasmic reticulum and is required for transport to the cell surface.

It is found in the cell membrane. V region of the variable domain of T cell receptor (TR) alpha chain that participates in the antigen recognition. Alpha-beta T cell receptors are antigen specific receptors which are essential to the immune response and are present on the cell surface of T lymphocytes. Recognize peptide-major histocompatibility (MH) (pMH) complexes that are displayed by antigen presenting cells (APC), a prerequisite for efficient T cell adaptive immunity against pathogens. Binding of alpha-beta TR to pMH complex initiates TR-CD3 clustering on the cell surface and intracellular activation of LCK that phosphorylates the ITAM motifs of CD3G, CD3D, CD3E and CD247 enabling the recruitment of ZAP70. In turn ZAP70 phosphorylates LAT, which recruits numerous signaling molecules to form the LAT signalosome. The LAT signalosome propagates signal branching to three major signaling pathways, the calcium, the mitogen-activated protein kinase (MAPK) kinase and the nuclear factor NF-kappa-B (NF-kB) pathways, leading to the mobilization of transcription factors that are critical for gene expression and essential for T cell growth and differentiation. The T cell repertoire is generated in the thymus, by V-(D)-J rearrangement. This repertoire is then shaped by intrathymic selection events to generate a peripheral T cell pool of self-MH restricted, non-autoaggressive T cells. Post-thymic interaction of alpha-beta TR with the pMH complexes shapes TR structural and functional avidity. The protein is T cell receptor alpha variable 22 of Homo sapiens (Human).